The primary structure comprises 161 residues: Anthrone oxygenase tpcL (161 aa).

N4 carries N-linked (GlcNAc...) asparagine glycosylation. Transmembrane regions (helical) follow at residues 15 to 35 (VITGSFLSGLMMGLSVVDIPV), 56 to 74 (IGHKMMPSLAVTTCLLYGY), 87 to 107 (LPHIIAAVTTISMVPFTWLVM), and 136 to 155 (WAQLHAVRSLFPLMGSVLGL).

The protein belongs to the anthrone oxygenase family. In terms of tissue distribution, specifically expressed in conidia.

Its subcellular location is the membrane. The enzyme catalyses emodin anthrone + O2 = emodin + H2O + H(+). Its pathway is secondary metabolite biosynthesis. Its function is as follows. Anthrone oxygenase; part of the gene cluster that mediates the biosynthesis of trypacidin, a mycotoxin with antiprotozoal activity and that plays a role in the infection process. The pathway begins with the synthesis of atrochrysone thioester by the polyketide synthase (PKS) tpcC. The atrochrysone carboxyl ACP thioesterase tpcB then breaks the thioester bond and releases the atrochrysone carboxylic acid from tpcC. The decarboxylase tpcK converts atrochrysone carboxylic acid to atrochrysone which is further reduced into emodin anthrone. The next step is performed by the emodin anthrone oxygenase tpcL that catalyzes the oxidation of emodinanthrone to emodin. Emodin O-methyltransferase encoded by tpcA catalyzes methylation of the 8-hydroxy group of emodin to form questin. Ring cleavage of questin by questin oxidase tpcI leads to desmethylsulochrin via several intermediates including questin epoxide. Another methylation step catalyzed by tpcM leads to the formation of sulochrin which is further converted to monomethylsulfochrin by tpcH. Finally, the tpcJ catalyzes the conversion of monomethylsulfochrin to trypacidin. Trypacidin is toxic for human pulmonary and bronchial epithelial cells by initiating the intracellular formation of nitric oxide (NO) and hydrogen peroxide (H(2)O(2)), thus triggering host necrotic cell death. The trypacidin pathway is also able to produce endocrocin via a distinct route from the endocrocin Enc pathway. The chain is Anthrone oxygenase tpcL from Aspergillus fumigatus (strain ATCC MYA-4609 / CBS 101355 / FGSC A1100 / Af293) (Neosartorya fumigata).